The following is a 710-amino-acid chain: Homeobox-leucine zipper protein ROC8 (710 aa).

The segment at 1 to 23 is disordered; it reads MDFGDEPEGSDSQRRRKRYHRHT. Residues 14–23 are compositionally biased toward basic residues; that stretch reads RRRKRYHRHT. Positions 15 to 74 form a DNA-binding region, homeobox; it reads RRKRYHRHTPRQIQQLEAMFKECPHPDENQRAQLSRELGLEPRQIKFWFQNRRTQMKAQH. Positions 82–144 form a coiled coil; it reads LRAENDKIRC…DRVSNLTSKY (63 aa). Positions 197–440 constitute an START domain; that stretch reads SDMERPMMAE…LQRACERYAS (244 aa). The span at 630 to 648 shows a compositional bias: low complexity; it reads RPGSAAGASTSSAGPLAAA. Residues 630–650 are disordered; that stretch reads RPGSAAGASTSSAGPLAAARG.

Belongs to the HD-ZIP homeobox family. Class IV subfamily.

Its subcellular location is the nucleus. Probable transcription factor. The polypeptide is Homeobox-leucine zipper protein ROC8 (ROC8) (Oryza sativa subsp. japonica (Rice)).